A 437-amino-acid chain; its full sequence is Gamma-glutamyl phosphate reductase (437 aa).

It belongs to the gamma-glutamyl phosphate reductase family.

It is found in the cytoplasm. The catalysed reaction is L-glutamate 5-semialdehyde + phosphate + NADP(+) = L-glutamyl 5-phosphate + NADPH + H(+). Its pathway is amino-acid biosynthesis; L-proline biosynthesis; L-glutamate 5-semialdehyde from L-glutamate: step 2/2. Catalyzes the NADPH-dependent reduction of L-glutamate 5-phosphate into L-glutamate 5-semialdehyde and phosphate. The product spontaneously undergoes cyclization to form 1-pyrroline-5-carboxylate. This chain is Gamma-glutamyl phosphate reductase, found in Synechococcus sp. (strain CC9902).